Consider the following 1005-residue polypeptide: PH and SEC7 domain-containing protein 4 (1005 aa).

A disordered region spans residues 27–66 (YPSEIHGHPGPSEPCQEHTCPFDPPESARPDAPHGNSGVE). A phosphoserine mark is found at Ser-85, Ser-88, and Ser-97. 4 disordered regions span residues 145–189 (PSKD…PGSS), 287–386 (LALG…NRGE), 407–525 (TSLL…SSSR), and 694–714 (EEDA…KISS). A compositionally biased stretch (acidic residues) spans 161 to 177 (EEDEDSGDDSSGPEEEN). The span at 350–361 (SQTSQSLSDLTQ) shows a compositional bias: low complexity. Phosphoserine is present on residues Ser-381 and Ser-435. Positions 428–438 (PVSSQDSSPRV) are enriched in low complexity. Basic and acidic residues-rich tracts occupy residues 453–465 (LQKD…SLKE) and 476–488 (QEAE…RSED). The region spanning 493–686 (QHHVHLASAE…KALYWSIRSE (194 aa)) is the SEC7 domain. Positions 726–841 (PTYKQGILAR…WIARINLAAA (116 aa)) constitute a PH domain. Residues 870–926 (SSLEEQHRSHENCLDAASDDLLDLQRNLPERRGRSRELEEYRLRKEYLEHEKTRYET) adopt a coiled-coil conformation. A disordered region spans residues 951-1005 (KETDGSQEPRPSLKKSHSSPSLHQEEAPTTAKVKRNISERRTYRKIIPKRNRNQL). Ser-968 and Ser-971 each carry phosphoserine. Over residues 992–1005 (TYRKIIPKRNRNQL) the composition is skewed to basic residues.

It is found in the cell membrane. The protein resides in the cell projection. It localises to the ruffle membrane. Its function is as follows. Guanine nucleotide exchange factor for ARF6 and ARL14/ARF7. Through ARL14 activation, controls the movement of MHC class II-containing vesicles along the actin cytoskeleton in dendritic cells. Involved in membrane recycling. Interacts with several phosphatidylinositol phosphate species, including phosphatidylinositol 3,4-bisphosphate, phosphatidylinositol 3,5-bisphosphate and phosphatidylinositol 4,5-bisphosphate. In Mus musculus (Mouse), this protein is PH and SEC7 domain-containing protein 4 (Psd4).